The following is a 219-amino-acid chain: Suppressor-of-stellate-like protein (219 aa).

Residues 194–219 (SAESPPIKVESSVSKSPSWLRNVPNF) form a disordered region. The span at 204-219 (SSVSKSPSWLRNVPNF) shows a compositional bias: polar residues.

It belongs to the casein kinase 2 subunit beta family.

The sequence is that of Suppressor-of-stellate-like protein (Ssl) from Drosophila melanogaster (Fruit fly).